Reading from the N-terminus, the 427-residue chain is Probable glucuronosyltransferase Os03g0107900 (427 aa).

Residues 1-33 lie on the Cytoplasmic side of the membrane; sequence MAMRGDPKQRRASASAPHGGAAHHVADKLRRHS. A helical; Signal-anchor for type II membrane protein membrane pass occupies residues 34 to 54; the sequence is TFLLLLLLLWFALSLYLFLSA. Residues 55–427 are Lumenal-facing; it reads TPPPPRPAFL…QRRHVESWKR (373 aa). N136, N168, N264, and N374 each carry an N-linked (GlcNAc...) asparagine glycan.

This sequence belongs to the glycosyltransferase 47 family.

It localises to the golgi apparatus membrane. In terms of biological role, involved in the synthesis of glucuronoxylan hemicellulose in secondary cell walls. The sequence is that of Probable glucuronosyltransferase Os03g0107900 from Oryza sativa subsp. japonica (Rice).